We begin with the raw amino-acid sequence, 387 residues long: Phosphoglycerate kinase (387 aa).

Residues 21–23, Arg-36, 59–62, Arg-113, and Arg-146 contribute to the substrate site; these read DLN and HLGR. ATP is bound by residues Lys-197, Glu-314, and 340 to 343; that span reads GGDT.

The protein belongs to the phosphoglycerate kinase family. In terms of assembly, monomer.

Its subcellular location is the cytoplasm. It catalyses the reaction (2R)-3-phosphoglycerate + ATP = (2R)-3-phospho-glyceroyl phosphate + ADP. Its pathway is carbohydrate degradation; glycolysis; pyruvate from D-glyceraldehyde 3-phosphate: step 2/5. This is Phosphoglycerate kinase from Pseudomonas savastanoi pv. phaseolicola (strain 1448A / Race 6) (Pseudomonas syringae pv. phaseolicola (strain 1448A / Race 6)).